A 375-amino-acid polypeptide reads, in one-letter code: Eukaryotic translation initiation factor 3 subunit F (375 aa).

The region spanning 30-166 (VVIQPQALFS…TRAYISAPVG (137 aa)) is the MPN domain. The disordered stretch occupies residues 307–375 (LGGESGSGES…EAQNGKEEKK (69 aa)). The segment covering 323-332 (QRGGKGGRGG) has biased composition (gly residues). 2 stretches are compositionally biased toward basic and acidic residues: residues 336–345 (TQERSGEEAR) and 358–375 (RSYE…EEKK).

It belongs to the eIF-3 subunit F family. Component of the eukaryotic translation initiation factor 3 (eIF-3) complex.

Its subcellular location is the cytoplasm. Functionally, component of the eukaryotic translation initiation factor 3 (eIF-3) complex, which is involved in protein synthesis of a specialized repertoire of mRNAs and, together with other initiation factors, stimulates binding of mRNA and methionyl-tRNAi to the 40S ribosome. The eIF-3 complex specifically targets and initiates translation of a subset of mRNAs involved in cell proliferation. The sequence is that of Eukaryotic translation initiation factor 3 subunit F from Aspergillus niger (strain ATCC MYA-4892 / CBS 513.88 / FGSC A1513).